Here is a 439-residue protein sequence, read N- to C-terminus: Glycosyl hydrolase DigH (439 aa).

Residues Met1–Ser27 form the signal peptide. A lipid anchor (N-palmitoyl cysteine) is attached at Cys28. Cys28 carries S-diacylglycerol cysteine lipidation. Positions Glu34–Gln54 are disordered.

It belongs to the glycosyl hydrolase-like 10 (GHL10) family.

The protein localises to the cell outer membrane. Divisome-localized glycosyl hydrolase that cleaves peptide-free (denuded) peptidoglycans. This Escherichia coli O6:H1 (strain CFT073 / ATCC 700928 / UPEC) protein is Glycosyl hydrolase DigH.